The chain runs to 156 residues: 6,7-dimethyl-8-ribityllumazine synthase (156 aa).

5-amino-6-(D-ribitylamino)uracil-binding positions include phenylalanine 22, alanine 57–glutamate 59, and threonine 81–isoleucine 83. A (2S)-2-hydroxy-3-oxobutyl phosphate-binding site is contributed by glycine 86–threonine 87. The active-site Proton donor is histidine 89. A 5-amino-6-(D-ribitylamino)uracil-binding site is contributed by phenylalanine 114. Arginine 128 contacts (2S)-2-hydroxy-3-oxobutyl phosphate.

Belongs to the DMRL synthase family. In terms of assembly, forms an icosahedral capsid composed of 60 subunits, arranged as a dodecamer of pentamers.

The catalysed reaction is (2S)-2-hydroxy-3-oxobutyl phosphate + 5-amino-6-(D-ribitylamino)uracil = 6,7-dimethyl-8-(1-D-ribityl)lumazine + phosphate + 2 H2O + H(+). It participates in cofactor biosynthesis; riboflavin biosynthesis; riboflavin from 2-hydroxy-3-oxobutyl phosphate and 5-amino-6-(D-ribitylamino)uracil: step 1/2. Its function is as follows. Catalyzes the formation of 6,7-dimethyl-8-ribityllumazine by condensation of 5-amino-6-(D-ribitylamino)uracil with 3,4-dihydroxy-2-butanone 4-phosphate. This is the penultimate step in the biosynthesis of riboflavin. The sequence is that of 6,7-dimethyl-8-ribityllumazine synthase from Yersinia pseudotuberculosis serotype O:1b (strain IP 31758).